The following is a 490-amino-acid chain: Angiopoietin-related protein 1 (490 aa).

An N-terminal signal peptide occupies residues 1–22 (MKAFVWTLSVLLFLLGSGHCKG). The stretch at 79–167 (ITRMDLENLK…LNVTTEMLKM (89 aa)) forms a coiled coil. N-linked (GlcNAc...) asparagine glycans are attached at residues Asn159 and Asn187. The region spanning 270 to 490 (FINEGPFKDC…AVQMMIKPID (221 aa)) is the Fibrinogen C-terminal domain. Disulfide bonds link Cys279–Cys308 and Cys431–Cys444.

It is found in the secreted. This Mus musculus (Mouse) protein is Angiopoietin-related protein 1 (Angptl1).